We begin with the raw amino-acid sequence, 88 residues long: Large ribosomal subunit protein bL27 (88 aa).

Residues Met1–Leu21 are disordered.

It belongs to the bacterial ribosomal protein bL27 family.

The protein is Large ribosomal subunit protein bL27 of Pelotomaculum thermopropionicum (strain DSM 13744 / JCM 10971 / SI).